We begin with the raw amino-acid sequence, 684 residues long: Beta-mannosyltransferase 1 (684 aa).

Topologically, residues 1 to 28 (MDKFIQSFSHQYLDSSSSLKLTARRKRK) are cytoplasmic. The chain crosses the membrane as a helical span at residues 29–49 (LTILGLFLFSLISLMIIISYS). Topologically, residues 50–684 (NNNILPGLSG…KFCKIYGETF (635 aa)) are extracellular. N-linked (GlcNAc...) asparagine glycosylation occurs at Asn297.

Belongs to the BMT family.

It is found in the membrane. Functionally, beta-mannosyltransferase involved in cell wall biosynthesis. Required for addition of the first beta-mannose residue to acid-stable fraction of cell wall phosphopeptidomannan. Plays a key role in reducing host inflammatory response. The chain is Beta-mannosyltransferase 1 (BMT1) from Candida albicans (strain SC5314 / ATCC MYA-2876) (Yeast).